The following is a 337-amino-acid chain: Holliday junction branch migration complex subunit RuvB (337 aa).

The tract at residues 4-184 (ADRLIEPIAS…FGIVQRLEFY (181 aa)) is large ATPase domain (RuvB-L). Residues Ile23, Arg24, Gly65, Lys68, Thr69, Thr70, 131-133 (EDY), Arg174, Tyr184, and Arg221 each bind ATP. Residue Thr69 participates in Mg(2+) binding. Residues 185 to 255 (NVADLSTIVS…TAAAALDMLE (71 aa)) form a small ATPAse domain (RuvB-S) region. The tract at residues 258–337 (SEGFDIMDRK…FGITKDQTKD (80 aa)) is head domain (RuvB-H). DNA-binding residues include Arg294, Arg313, and Arg318.

The protein belongs to the RuvB family. As to quaternary structure, homohexamer. Forms an RuvA(8)-RuvB(12)-Holliday junction (HJ) complex. HJ DNA is sandwiched between 2 RuvA tetramers; dsDNA enters through RuvA and exits via RuvB. An RuvB hexamer assembles on each DNA strand where it exits the tetramer. Each RuvB hexamer is contacted by two RuvA subunits (via domain III) on 2 adjacent RuvB subunits; this complex drives branch migration. In the full resolvosome a probable DNA-RuvA(4)-RuvB(12)-RuvC(2) complex forms which resolves the HJ.

It is found in the cytoplasm. The catalysed reaction is ATP + H2O = ADP + phosphate + H(+). Its function is as follows. The RuvA-RuvB-RuvC complex processes Holliday junction (HJ) DNA during genetic recombination and DNA repair, while the RuvA-RuvB complex plays an important role in the rescue of blocked DNA replication forks via replication fork reversal (RFR). RuvA specifically binds to HJ cruciform DNA, conferring on it an open structure. The RuvB hexamer acts as an ATP-dependent pump, pulling dsDNA into and through the RuvAB complex. RuvB forms 2 homohexamers on either side of HJ DNA bound by 1 or 2 RuvA tetramers; 4 subunits per hexamer contact DNA at a time. Coordinated motions by a converter formed by DNA-disengaged RuvB subunits stimulates ATP hydrolysis and nucleotide exchange. Immobilization of the converter enables RuvB to convert the ATP-contained energy into a lever motion, pulling 2 nucleotides of DNA out of the RuvA tetramer per ATP hydrolyzed, thus driving DNA branch migration. The RuvB motors rotate together with the DNA substrate, which together with the progressing nucleotide cycle form the mechanistic basis for DNA recombination by continuous HJ branch migration. Branch migration allows RuvC to scan DNA until it finds its consensus sequence, where it cleaves and resolves cruciform DNA. This Colwellia psychrerythraea (strain 34H / ATCC BAA-681) (Vibrio psychroerythus) protein is Holliday junction branch migration complex subunit RuvB.